Here is a 306-residue protein sequence, read N- to C-terminus: Ribonuclease Z (306 aa).

His63, His65, Asp67, His68, His141, Asp211, and His269 together coordinate Zn(2+). The Proton acceptor role is filled by Asp67.

This sequence belongs to the RNase Z family. As to quaternary structure, homodimer. Zn(2+) is required as a cofactor.

It carries out the reaction Endonucleolytic cleavage of RNA, removing extra 3' nucleotides from tRNA precursor, generating 3' termini of tRNAs. A 3'-hydroxy group is left at the tRNA terminus and a 5'-phosphoryl group is left at the trailer molecule.. Zinc phosphodiesterase, which displays some tRNA 3'-processing endonuclease activity. Probably involved in tRNA maturation, by removing a 3'-trailer from precursor tRNA. This chain is Ribonuclease Z, found in Staphylococcus saprophyticus subsp. saprophyticus (strain ATCC 15305 / DSM 20229 / NCIMB 8711 / NCTC 7292 / S-41).